A 308-amino-acid polypeptide reads, in one-letter code: Bifunctional protein FolD (308 aa).

170 to 172 is an NADP(+) binding site; the sequence is GKG.

The protein belongs to the tetrahydrofolate dehydrogenase/cyclohydrolase family. Homodimer.

The enzyme catalyses (6R)-5,10-methylene-5,6,7,8-tetrahydrofolate + NADP(+) = (6R)-5,10-methenyltetrahydrofolate + NADPH. It carries out the reaction (6R)-5,10-methenyltetrahydrofolate + H2O = (6R)-10-formyltetrahydrofolate + H(+). The protein operates within one-carbon metabolism; tetrahydrofolate interconversion. Functionally, catalyzes the oxidation of 5,10-methylenetetrahydrofolate to 5,10-methenyltetrahydrofolate and then the hydrolysis of 5,10-methenyltetrahydrofolate to 10-formyltetrahydrofolate. This is Bifunctional protein FolD from Pyrobaculum calidifontis (strain DSM 21063 / JCM 11548 / VA1).